The following is a 567-amino-acid chain: Geraniol synthase, chloroplastic (567 aa).

Residues 1 to 63 constitute a chloroplast transit peptide; it reads MSCARITVTL…GDNSQRKNTR (63 aa). Positions 48–75 are disordered; the sequence is STPLINGDNSQRKNTRQHMEESSSKRRE. The span at 64–75 shows a compositional bias: basic and acidic residues; the sequence is QHMEESSSKRRE. Residues Arg286, Asp323, Asp327, Arg466, and Asp469 each contribute to the (2E)-geranyl diphosphate site. Mn(2+) contacts are provided by Asp323 and Asp327. Positions 323 to 327 match the DDXXD motif motif; that stretch reads DDIFD. Mn(2+) is bound by residues Asp469, Thr473, and Glu477.

Belongs to the terpene synthase family. Tpsb subfamily. In terms of assembly, homodimer. Requires Mn(2+) as cofactor. Expressed in the peltate glandular trichomes of the leaves.

Its subcellular location is the plastid. The protein localises to the chloroplast. The enzyme catalyses (2E)-geranyl diphosphate + H2O = (2E)-geraniol + diphosphate. It participates in secondary metabolite biosynthesis; terpenoid biosynthesis. In terms of biological role, monoterpene synthase that catalyzes the formation of geraniol from geranyl diphosphate. This chain is Geraniol synthase, chloroplastic (GES), found in Ocimum basilicum (Sweet basil).